We begin with the raw amino-acid sequence, 233 residues long: NADP-dependent glyceraldehyde-3-phosphate dehydrogenase (233 aa).

Residue 7–8 participates in substrate binding; it reads NY. NADP(+)-binding residues include Lys30 and Ser33. 83-87 is an NAD(+) binding site; the sequence is GGDTG. Glu102 serves as the catalytic Proton acceptor. Residue 135–137 coordinates substrate; the sequence is RCT. Cys136 acts as the Nucleophile in catalysis. NADP(+)-binding residues include Glu180 and Glu229.

The protein belongs to the aldehyde dehydrogenase family.

It localises to the cytoplasm. The enzyme catalyses D-glyceraldehyde 3-phosphate + NADP(+) + H2O = (2R)-3-phosphoglycerate + NADPH + 2 H(+). Its function is as follows. Important as a means of generating NADPH for biosynthetic reactions. This Scenedesmus vacuolatus (Green alga) protein is NADP-dependent glyceraldehyde-3-phosphate dehydrogenase (GapN).